A 293-amino-acid chain; its full sequence is Fructose-bisphosphate aldolase (293 aa).

S50 lines the D-glyceraldehyde 3-phosphate pocket. D85 serves as the catalytic Proton donor. Zn(2+) contacts are provided by H86, D106, E136, and H178. G179 serves as a coordination point for dihydroxyacetone phosphate. H208 contributes to the Zn(2+) binding site. Dihydroxyacetone phosphate contacts are provided by residues 209–211 (GGS) and 230–233 (NVNT).

Belongs to the class II fructose-bisphosphate aldolase family. The cofactor is Zn(2+).

It catalyses the reaction beta-D-fructose 1,6-bisphosphate = D-glyceraldehyde 3-phosphate + dihydroxyacetone phosphate. It participates in carbohydrate degradation; glycolysis; D-glyceraldehyde 3-phosphate and glycerone phosphate from D-glucose: step 4/4. Functionally, catalyzes the aldol condensation of dihydroxyacetone phosphate (DHAP or glycerone-phosphate) with glyceraldehyde 3-phosphate (G3P) to form fructose 1,6-bisphosphate (FBP) in gluconeogenesis and the reverse reaction in glycolysis. This chain is Fructose-bisphosphate aldolase (fba), found in Streptococcus pneumoniae serotype 4 (strain ATCC BAA-334 / TIGR4).